We begin with the raw amino-acid sequence, 51 residues long: Bacteriocin aureocin A53 (51 aa).

Position 1 is an N-formylmethionine (Met1).

The protein localises to the secreted. In terms of biological role, antibacterial peptide active against a broad range of lactic acid bacteria, L.monocytogenes and many epidemiologically unrelated strains of S.aureus involved in bovine mastitis. This Staphylococcus aureus protein is Bacteriocin aureocin A53 (aucA).